A 602-amino-acid chain; its full sequence is Elongation factor 4 (602 aa).

One can recognise a tr-type G domain in the interval 7–189; the sequence is KYIRNFSIVA…AIVNKVPAPD (183 aa). Residues 19 to 24 and 136 to 139 contribute to the GTP site; these read DHGKST and NKID.

This sequence belongs to the TRAFAC class translation factor GTPase superfamily. Classic translation factor GTPase family. LepA subfamily.

The protein resides in the cell membrane. The catalysed reaction is GTP + H2O = GDP + phosphate + H(+). Functionally, required for accurate and efficient protein synthesis under certain stress conditions. May act as a fidelity factor of the translation reaction, by catalyzing a one-codon backward translocation of tRNAs on improperly translocated ribosomes. Back-translocation proceeds from a post-translocation (POST) complex to a pre-translocation (PRE) complex, thus giving elongation factor G a second chance to translocate the tRNAs correctly. Binds to ribosomes in a GTP-dependent manner. The protein is Elongation factor 4 of Clostridium botulinum (strain ATCC 19397 / Type A).